We begin with the raw amino-acid sequence, 309 residues long: Acetolactate synthase small subunit, mitochondrial (309 aa).

The N-terminal 24 residues, 1 to 24, are a transit peptide targeting the mitochondrion; sequence MLRSLLQSGHRRVVASSCATMVRC. Positions 79–159 constitute an ACT domain; the sequence is VLNCLVQNEP…DYTNSEIIKR (81 aa).

This sequence belongs to the acetolactate synthase small subunit family. The acetolactate synthase complex contains the catalytic regulatory subunit ILV2 and the regulatory small subunit ILV6.

It localises to the mitochondrion. The protein operates within amino-acid biosynthesis; L-isoleucine biosynthesis; L-isoleucine from 2-oxobutanoate: step 1/4. Its pathway is amino-acid biosynthesis; L-valine biosynthesis; L-valine from pyruvate: step 1/4. Its function is as follows. Regulatory subunit of mitochondrial acetolactate synthase, which catalyzes the first of a series of common steps in the biosynthesis of the branched-chain amino acids. Stimulates activity of the acetolactate synthase catalytic subunit ILV2 seven- to tenfold and confers sensitivity to inhibition by valine and activation by ATP. This Saccharomyces cerevisiae (strain ATCC 204508 / S288c) (Baker's yeast) protein is Acetolactate synthase small subunit, mitochondrial (ILV6).